A 488-amino-acid polypeptide reads, in one-letter code: Ammonium transporter Rh type C-like 2 (488 aa).

Residues 1 to 21 are Cytoplasmic-facing; it reads MGNCFGSRGICDRPKNTNIRL. The chain crosses the membrane as a helical span at residues 22-42; that stretch reads SLPAVCFVWQVSMIILFGVFV. The Extracellular segment spans residues 43–73; it reads RYNEEADTNWVYTKKEKNITSDIENDFYFRY. A glycan (N-linked (GlcNAc...) asparagine) is linked at Asn60. A helical membrane pass occupies residues 74–94; the sequence is PSFQDVHVMIFVGFGFLMTFL. At 95–98 the chain is on the cytoplasmic side; it reads KRYS. A helical transmembrane segment spans residues 99–119; it reads FGAVGFNFLIAAFGLQWALLM. Over 120-139 the chain is Extracellular; the sequence is QGWFSPLGDDGKIKIGIENL. A helical transmembrane segment spans residues 140 to 160; that stretch reads INADFCVASCLIAYGAVLGKV. Residues 161–162 lie on the Cytoplasmic side of the membrane; the sequence is SP. The helical transmembrane segment at 163–183 threads the bilayer; it reads VQLLVMTLFGITLYAVEEFII. Over 184-191 the chain is Extracellular; it reads LRVLNAKD. Residues 192 to 214 form a helical membrane-spanning segment; that stretch reads AGGSMVIHTFGAYYGLSISRVLY. At 215–232 the chain is on the cytoplasmic side; the sequence is RPNLNKSKHMNGSVYHSD. A helical membrane pass occupies residues 233–253; it reads VFAMIGTLFLWMFWPSFNSAI. Over 254–264 the chain is Extracellular; that stretch reads CNHGDGQHRAA. Residues 265–285 form a helical membrane-spanning segment; sequence INTYLALASTVLTTVAISSMF. Residues 286–298 lie on the Cytoplasmic side of the membrane; sequence EKTGKLDMVHIQN. Residues 299–319 traverse the membrane as a helical segment; it reads STLAGGVAVGTAAEFMLMPYG. Position 320 (Ser320) is a topological domain, extracellular. A helical membrane pass occupies residues 321 to 341; that stretch reads LIVGFFCGIISTLGYIYLTPF. The Cytoplasmic portion of the chain corresponds to 342-356; sequence LEERLKIQDTCGIHN. A helical membrane pass occupies residues 357–377; it reads LHAMPGVIGGIVGAISAAAAS. At 378 to 409 the chain is on the extracellular side; the sequence is KEVYGDLGLKNIFSIEGSNVTRLPTVQGGYQA. A helical membrane pass occupies residues 410-430; the sequence is AALCVALCFGIGGGTFVGLVL. Residues 431–488 are Cytoplasmic-facing; the sequence is KLPIWGDPADEHCFNDEMYWEVPEDEESIIPPVLSYNNHMIPNNKHEEMRETNFAEQS.

Belongs to the ammonium transporter (TC 2.A.49) family. Rh subfamily. Homotrimer. In terms of tissue distribution, at larval stages, expressed only in the yolk sac and gill. However, the kidney and the gills are major sites of expression in adults.

It localises to the apical cell membrane. Functions as an ammonia transporter. May play a role in the elimination of ammonia in the gill. The polypeptide is Ammonium transporter Rh type C-like 2 (rhcgl2) (Danio rerio (Zebrafish)).